We begin with the raw amino-acid sequence, 410 residues long: Serine hydroxymethyltransferase (410 aa).

(6S)-5,6,7,8-tetrahydrofolate contacts are provided by residues Leu116 and 120-122; that span reads GHL. Residue Lys225 is modified to N6-(pyridoxal phosphate)lysine.

This sequence belongs to the SHMT family. Homodimer. The cofactor is pyridoxal 5'-phosphate.

The protein resides in the cytoplasm. It carries out the reaction (6R)-5,10-methylene-5,6,7,8-tetrahydrofolate + glycine + H2O = (6S)-5,6,7,8-tetrahydrofolate + L-serine. It functions in the pathway one-carbon metabolism; tetrahydrofolate interconversion. It participates in amino-acid biosynthesis; glycine biosynthesis; glycine from L-serine: step 1/1. Its function is as follows. Catalyzes the reversible interconversion of serine and glycine with tetrahydrofolate (THF) serving as the one-carbon carrier. This reaction serves as the major source of one-carbon groups required for the biosynthesis of purines, thymidylate, methionine, and other important biomolecules. Also exhibits THF-independent aldolase activity toward beta-hydroxyamino acids, producing glycine and aldehydes, via a retro-aldol mechanism. The protein is Serine hydroxymethyltransferase of Lacticaseibacillus casei (strain BL23) (Lactobacillus casei).